We begin with the raw amino-acid sequence, 90 residues long: Small ribosomal subunit protein bS20 (90 aa).

Belongs to the bacterial ribosomal protein bS20 family.

Its function is as follows. Binds directly to 16S ribosomal RNA. The protein is Small ribosomal subunit protein bS20 of Roseiflexus sp. (strain RS-1).